A 497-amino-acid polypeptide reads, in one-letter code: RNA polymerase sigma factor SigA (497 aa).

Disordered regions lie at residues 1 to 20 (MSTD…PELS) and 62 to 86 (KTLH…HAPL). Residues 63 to 73 (TLHENKESDVP) are compositionally biased toward basic and acidic residues. A compositionally biased stretch (basic residues) spans 74-84 (KKRRGRKPKHA). Residues 250-320 (LVTSNLRLVV…TRAIADQART (71 aa)) form a sigma-70 factor domain-2 region. The Interaction with polymerase core subunit RpoC signature appears at 274 to 277 (DLIQ). The interval 329–410 (ETINRLAKAE…DTDAQTPDEF (82 aa)) is sigma-70 factor domain-3. The tract at residues 423–478 (LLNNNLSEQEELIVRMRIGMPPYNEPKTLDEVGQKILIPREKIRQIENKAIRKLRH) is sigma-70 factor domain-4. Residues 451–470 (LDEVGQKILIPREKIRQIEN) constitute a DNA-binding region (H-T-H motif).

It belongs to the sigma-70 factor family. RpoD/SigA subfamily. Interacts transiently with the RNA polymerase catalytic core.

Its subcellular location is the cytoplasm. In terms of biological role, sigma factors are initiation factors that promote the attachment of RNA polymerase to specific initiation sites and are then released. This sigma factor is the primary sigma factor during exponential growth. The chain is RNA polymerase sigma factor SigA from Mycoplasma genitalium (strain ATCC 33530 / DSM 19775 / NCTC 10195 / G37) (Mycoplasmoides genitalium).